Here is an 843-residue protein sequence, read N- to C-terminus: Protein P (843 aa).

The segment at 1–177 (MPLSYQHFRR…FCGSPYSWEQ (177 aa)) is terminal protein domain (TP). Residues 178-346 (ELQHGSTSLN…YCLSHIINLL (169 aa)) form a spacer region. The segment at 249-301 (TPTRWPSGVEPSGTGHSDNLATRSTSRFHQSEVRKETNPSLSTSKGHTSTGHA) is disordered. Polar residues-rich tracts occupy residues 262-276 (TGHS…TSRF) and 286-299 (NPSL…TSTG). A polymerase/reverse transcriptase domain (RT) region spans residues 347–690 (EDWGPCYEHG…YMNLYPVARQ (344 aa)). Residues 357–600 (EHHIRTPRTP…YSLHFMGYII (244 aa)) enclose the Reverse transcriptase domain. Mg(2+) contacts are provided by D429, D551, and D552.

It belongs to the hepadnaviridae P protein family.

It carries out the reaction DNA(n) + a 2'-deoxyribonucleoside 5'-triphosphate = DNA(n+1) + diphosphate. The enzyme catalyses Endonucleolytic cleavage to 5'-phosphomonoester.. Activated by host HSP70 and HSP40 in vitro to be able to bind the epsilon loop of the pgRNA. Because deletion of the RNase H region renders the protein partly chaperone-independent, the chaperones may be needed indirectly to relieve occlusion of the RNA-binding site by this domain. Inhibited by several reverse-transcriptase inhibitors: Lamivudine, Adefovir and Entecavir. Multifunctional enzyme that converts the viral RNA genome into dsDNA in viral cytoplasmic capsids. This enzyme displays a DNA polymerase activity that can copy either DNA or RNA templates, and a ribonuclease H (RNase H) activity that cleaves the RNA strand of RNA-DNA heteroduplexes in a partially processive 3'- to 5'-endonucleasic mode. Neo-synthesized pregenomic RNA (pgRNA) are encapsidated together with the P protein, and reverse-transcribed inside the nucleocapsid. Initiation of reverse-transcription occurs first by binding the epsilon loop on the pgRNA genome, and is initiated by protein priming, thereby the 5'-end of (-)DNA is covalently linked to P protein. Partial (+)DNA is synthesized from the (-)DNA template and generates the relaxed circular DNA (RC-DNA) genome. After budding and infection, the RC-DNA migrates in the nucleus, and is converted into a plasmid-like covalently closed circular DNA (cccDNA). The activity of P protein does not seem to be necessary for cccDNA generation, and is presumably released from (+)DNA by host nuclear DNA repair machinery. This Homo sapiens (Human) protein is Protein P.